A 364-amino-acid polypeptide reads, in one-letter code: Methylthioribose-1-phosphate isomerase (364 aa).

Substrate contacts are provided by residues 53 to 55 (RGA), R90, and Q200. D241 serves as the catalytic Proton donor. 251-252 (NK) contacts substrate.

The protein belongs to the eIF-2B alpha/beta/delta subunits family. MtnA subfamily.

The enzyme catalyses 5-(methylsulfanyl)-alpha-D-ribose 1-phosphate = 5-(methylsulfanyl)-D-ribulose 1-phosphate. It participates in amino-acid biosynthesis; L-methionine biosynthesis via salvage pathway; L-methionine from S-methyl-5-thio-alpha-D-ribose 1-phosphate: step 1/6. Functionally, catalyzes the interconversion of methylthioribose-1-phosphate (MTR-1-P) into methylthioribulose-1-phosphate (MTRu-1-P). The chain is Methylthioribose-1-phosphate isomerase from Methylobacterium nodulans (strain LMG 21967 / CNCM I-2342 / ORS 2060).